Consider the following 281-residue polypeptide: Energy-coupling factor transporter ATP-binding protein EcfA1 (281 aa).

The ABC transporter domain maps to 7 to 242; the sequence is ISVEDIVFRY…NKELVRIGLD (236 aa). 42–49 contacts ATP; that stretch reads GHNGSGKS. Catalysis depends on Glu-168, which acts as the Proton acceptor.

This sequence belongs to the ABC transporter superfamily. Energy-coupling factor EcfA family. Forms a stable energy-coupling factor (ECF) transporter complex composed of 2 membrane-embedded substrate-binding proteins (S component), 2 ATP-binding proteins (A component) and 2 transmembrane proteins (T component).

Its subcellular location is the cell membrane. In terms of biological role, ATP-binding (A) component of a common energy-coupling factor (ECF) ABC-transporter complex. Unlike classic ABC transporters this ECF transporter provides the energy necessary to transport a number of different substrates. The polypeptide is Energy-coupling factor transporter ATP-binding protein EcfA1 (Bacillus subtilis (strain 168)).